Consider the following 475-residue polypeptide: Pregnancy-specific glycoprotein 22 (475 aa).

The first 35 residues, 1–35 (MEVSSELLSNGWTSWQRVLLTASLLTCWLLPITAG), serve as a signal peptide directing secretion. Ig-like V-type domains are found at residues 44-140 (KLVE…FLQV), 162-260 (PASV…YLQV), and 280-380 (PVPP…QVNV). Asn103, Asn110, and Asn231 each carry an N-linked (GlcNAc...) asparagine glycan. Residues 387–471 (PVMRVTDSTV…SKTSLPVRLT (85 aa)) enclose the Ig-like C2-type domain. Cys406 and Cys454 form a disulfide bridge.

Belongs to the immunoglobulin superfamily. CEA family.

It localises to the secreted. In terms of biological role, may have an angiogenic function during early placental development. Binds to cell-surface heparan sulfate proteoglycans (HSPGs), and stimulates secretion of the proangiogenic factors VEGFA and TGFB from uterine dendritic cells and natural killer cells. Also induces endothelial tube formation in vitro. The protein is Pregnancy-specific glycoprotein 22 of Mus musculus (Mouse).